Here is a 147-residue protein sequence, read N- to C-terminus: MVHLSGDEKNAVHGLWSKVKVDEVGGEALGRLLVVYPWTRRFFESFGDLSTADAVMNNPKVKAHGSKVLNSFGDGLNHLDNLKGTYAKLSELHCDKLHVDPENFRLLGNVLVVVLARHFGKEFTPDLQAAYQKVVAGVANALAHRYH.

At Val-2 the chain carries N-acetylvaline. The Globin domain occupies 3-147 (HLSGDEKNAV…VANALAHRYH (145 aa)). Residue Ser-45 is modified to Phosphoserine. At Lys-60 the chain carries N6-acetyllysine. His-64 serves as a coordination point for heme b. Lys-83 carries the post-translational modification N6-acetyllysine. His-93 provides a ligand contact to heme b. Cys-94 bears the S-nitrosocysteine mark.

It belongs to the globin family. Heterotetramer of two alpha chains and two beta chains. In terms of tissue distribution, red blood cells.

In terms of biological role, involved in oxygen transport from the lung to the various peripheral tissues. This chain is Hemoglobin subunit beta (HBB), found in Camelus dromedarius (Dromedary).